A 213-amino-acid chain; its full sequence is mRNA-decapping protein D9 (213 aa).

Residues 30–209 enclose the Nudix hydrolase domain; sequence KDTHVFAACI…EYLSYIYNML (180 aa). A Nudix box motif is present at residues 111-132; that stretch reads GKLDKKESIKDCLRRELKEESD. Glutamate 117 is a Mg(2+) binding site. Catalysis depends on glutamate 126, which acts as the Nucleophile. Glutamate 130 and aspartate 151 together coordinate Mg(2+).

This sequence belongs to the Nudix hydrolase family. Requires Mg(2+) as cofactor. Mn(2+) is required as a cofactor.

Functionally, decapping enzyme required for the removal of the 5'-end m7GpppN cap tethered to viral and host mRNAs to allow their decay in cells. May therefore accelerate viral and cellular mRNA turnover to eliminate competing host mRNAs and allow stage-specific synthesis of viral proteins. Acceleration of the turnover of cellular transcripts may even promote the shutoff of host protein synthesis. Does not cleave unmethylated RNAs or RNAs shorter than 24 nucleotides. The protein is mRNA-decapping protein D9 of Homo sapiens (Human).